Consider the following 809-residue polypeptide: Leucine--tRNA ligase (809 aa).

Positions 40–50 (PYPSGRIHMGH) match the 'HIGH' region motif. The short motif at 579 to 583 (KMSKS) is the 'KMSKS' region element. Lys582 lines the ATP pocket.

This sequence belongs to the class-I aminoacyl-tRNA synthetase family.

The protein resides in the cytoplasm. It carries out the reaction tRNA(Leu) + L-leucine + ATP = L-leucyl-tRNA(Leu) + AMP + diphosphate. In Campylobacter jejuni subsp. jejuni serotype O:23/36 (strain 81-176), this protein is Leucine--tRNA ligase.